The following is a 532-amino-acid chain: CTP synthase (532 aa).

Residues 1 to 269 are amidoligase domain; the sequence is MNQASTRFIF…DTQILNHFNI (269 aa). Residue S17 participates in CTP binding. S17 provides a ligand contact to UTP. Residues 18 to 23 and D75 each bind ATP; that span reads SLGKGL. Mg(2+) is bound by residues D75 and E143. Residues 150 to 152, 190 to 195, and K226 contribute to the CTP site; these read DIE and KTKPTQ. Residues 190–195 and K226 each bind UTP; that span reads KTKPTQ. The Glutamine amidotransferase type-1 domain maps to 294 to 532; it reads NVAIIGKYIK…FISFIKASLD (239 aa). An L-glutamine-binding site is contributed by G355. Catalysis depends on C382, which acts as the Nucleophile; for glutamine hydrolysis. Residues 383 to 386, E406, and R462 each bind L-glutamine; that span reads MGMQ. Residues H509 and E511 contribute to the active site.

Belongs to the CTP synthase family. In terms of assembly, homotetramer.

The enzyme catalyses UTP + L-glutamine + ATP + H2O = CTP + L-glutamate + ADP + phosphate + 2 H(+). It catalyses the reaction L-glutamine + H2O = L-glutamate + NH4(+). It carries out the reaction UTP + NH4(+) + ATP = CTP + ADP + phosphate + 2 H(+). The protein operates within pyrimidine metabolism; CTP biosynthesis via de novo pathway; CTP from UDP: step 2/2. With respect to regulation, allosterically activated by GTP, when glutamine is the substrate; GTP has no effect on the reaction when ammonia is the substrate. The allosteric effector GTP functions by stabilizing the protein conformation that binds the tetrahedral intermediate(s) formed during glutamine hydrolysis. Inhibited by the product CTP, via allosteric rather than competitive inhibition. Its function is as follows. Catalyzes the ATP-dependent amination of UTP to CTP with either L-glutamine or ammonia as the source of nitrogen. Regulates intracellular CTP levels through interactions with the four ribonucleotide triphosphates. This is CTP synthase from Ehrlichia chaffeensis (strain ATCC CRL-10679 / Arkansas).